We begin with the raw amino-acid sequence, 261 residues long: Small ribosomal subunit protein eS1A (261 aa).

Basic residues predominate over residues 1-18 (MTLGKNKRISKGGKRGKK). The segment at 1–23 (MTLGKNKRISKGGKRGKKKTQET) is disordered.

It belongs to the eukaryotic ribosomal protein eS1 family. Component of the small ribosomal subunit. Mature ribosomes consist of a small (40S) and a large (60S) subunit. The 40S subunit contains about 33 different proteins and 1 molecule of RNA (18S). The 60S subunit contains about 49 different proteins and 3 molecules of RNA (25S, 5.8S and 5S).

The protein localises to the cytoplasm. This is Small ribosomal subunit protein eS1A from Trypanosoma cruzi (strain CL Brener).